The chain runs to 218 residues: Large ribosomal subunit protein uL3c (218 aa).

The segment at 127–161 is disordered; that stretch reads GFSRGPMTHGSKNHREPGSTGAGTTPGRIYPGKRM.

This sequence belongs to the universal ribosomal protein uL3 family. In terms of assembly, part of the 50S ribosomal subunit.

The protein resides in the plastid. It is found in the organellar chromatophore. One of the primary rRNA binding proteins, it binds directly near the 3'-end of the 23S rRNA, where it nucleates assembly of the 50S subunit. The polypeptide is Large ribosomal subunit protein uL3c (rpl3) (Paulinella chromatophora).